The following is a 221-amino-acid chain: Max dimerization protein 1 (221 aa).

The Nuclear localization signal signature appears at 21–49; it reads RREREAEHGYASMLPYNSKERDGLKRKSK. Disordered stretches follow at residues 28 to 67 and 176 to 202; these read HGYA…EKNR and DWSS…DEGY. Positions 55-107 constitute a bHLH domain; the sequence is NSRSTHNEMEKNRRAHLRLCLEKLKILVPLGPESNRHTTLSLLTRAKSHIKKL. Positions 192 to 202 are enriched in polar residues; it reads SMQSICSDEGY.

Efficient DNA binding requires dimerization with another bHLH protein. Binds DNA as a heterodimer with MAX.

The protein localises to the nucleus. Functionally, transcriptional repressor. MAD binds with MAX to form a sequence-specific DNA-binding protein complex which recognizes the core sequence 5'-CAC[GA]TG-3'. MAD thus antagonizes MYC transcriptional activity by competing for MAX. This chain is Max dimerization protein 1 (mxd1), found in Xenopus tropicalis (Western clawed frog).